The chain runs to 1128 residues: DNA-directed RNA polymerase subunit Rpo2 (1128 aa).

DsDNA is bound by residues Lys-178, 181–182, Lys-206, 435–439, and 1027–1032; these read SN, RGQPN, and RFGEME. Residues Cys-1061, Cys-1064, Cys-1079, and His-1082 each coordinate Zn(2+).

This sequence belongs to the RNA polymerase beta chain family. Part of the 13-subunit RNA polymerase complex. The cofactor is Zn(2+).

It is found in the cytoplasm. The catalysed reaction is RNA(n) + a ribonucleoside 5'-triphosphate = RNA(n+1) + diphosphate. Functionally, DNA-dependent RNA polymerase (RNAP) catalyzes the transcription of DNA into RNA using the four ribonucleoside triphosphates as substrates. This subunit is involved in DNA promoter recognition. The polypeptide is DNA-directed RNA polymerase subunit Rpo2 (Saccharolobus shibatae (strain ATCC 51178 / DSM 5389 / JCM 8931 / NBRC 15437 / B12) (Sulfolobus shibatae)).